The following is a 420-amino-acid chain: Putative transporter AmpG 3 (420 aa).

The next 12 membrane-spanning stretches (helical) occupy residues 6–26 (YLIG…LIFF), 41–61 (IVGS…WSPF), 79–99 (GWAL…LKRS), 104–124 (LCIT…QDIV), 141–161 (IAFT…SVGA), 166–186 (IIFG…VGPI), 230–250 (LLLI…PMAM), 274–294 (LLIM…IGIF), 297–317 (VLIG…LATI), 324–344 (FIIT…IISI), 359–381 (YSIS…GICA), and 386–406 (WPVF…IFYI).

Belongs to the major facilitator superfamily.

It is found in the cell inner membrane. This chain is Putative transporter AmpG 3 (ampG3), found in Rickettsia typhi (strain ATCC VR-144 / Wilmington).